The following is an 875-amino-acid chain: Alanine--tRNA ligase (875 aa).

Zn(2+)-binding residues include histidine 562, histidine 566, cysteine 665, and histidine 669.

It belongs to the class-II aminoacyl-tRNA synthetase family. The cofactor is Zn(2+).

The protein localises to the cytoplasm. The enzyme catalyses tRNA(Ala) + L-alanine + ATP = L-alanyl-tRNA(Ala) + AMP + diphosphate. In terms of biological role, catalyzes the attachment of alanine to tRNA(Ala) in a two-step reaction: alanine is first activated by ATP to form Ala-AMP and then transferred to the acceptor end of tRNA(Ala). Also edits incorrectly charged Ser-tRNA(Ala) and Gly-tRNA(Ala) via its editing domain. This Saccharophagus degradans (strain 2-40 / ATCC 43961 / DSM 17024) protein is Alanine--tRNA ligase.